The primary structure comprises 461 residues: Bifunctional protein GlmU (461 aa).

Positions 1 to 232 (MNLQIIILAA…SFEVQGINNR (232 aa)) are pyrophosphorylase. UDP-N-acetyl-alpha-D-glucosamine is bound by residues 8–11 (LAAG), Lys-22, Gln-73, and 78–79 (GT). Asp-102 is a binding site for Mg(2+). The UDP-N-acetyl-alpha-D-glucosamine site is built by Gly-142, Glu-157, and Asn-230. Asn-230 contributes to the Mg(2+) binding site. Positions 233-253 (QQLQQLERIWQQRAANQLMEK) are linker. Residues 254 to 461 (GATLADANRF…WKRPVKRERD (208 aa)) are N-acetyltransferase. UDP-N-acetyl-alpha-D-glucosamine-binding residues include Arg-336 and Lys-354. His-366 acts as the Proton acceptor in catalysis. Positions 369 and 380 each coordinate UDP-N-acetyl-alpha-D-glucosamine. Residues Ala-383, 389-390 (NY), Ser-408, and Ala-426 contribute to the acetyl-CoA site.

In the N-terminal section; belongs to the N-acetylglucosamine-1-phosphate uridyltransferase family. This sequence in the C-terminal section; belongs to the transferase hexapeptide repeat family. Homotrimer. Mg(2+) is required as a cofactor.

The protein localises to the cytoplasm. It carries out the reaction alpha-D-glucosamine 1-phosphate + acetyl-CoA = N-acetyl-alpha-D-glucosamine 1-phosphate + CoA + H(+). The catalysed reaction is N-acetyl-alpha-D-glucosamine 1-phosphate + UTP + H(+) = UDP-N-acetyl-alpha-D-glucosamine + diphosphate. It participates in nucleotide-sugar biosynthesis; UDP-N-acetyl-alpha-D-glucosamine biosynthesis; N-acetyl-alpha-D-glucosamine 1-phosphate from alpha-D-glucosamine 6-phosphate (route II): step 2/2. Its pathway is nucleotide-sugar biosynthesis; UDP-N-acetyl-alpha-D-glucosamine biosynthesis; UDP-N-acetyl-alpha-D-glucosamine from N-acetyl-alpha-D-glucosamine 1-phosphate: step 1/1. It functions in the pathway bacterial outer membrane biogenesis; LPS lipid A biosynthesis. Catalyzes the last two sequential reactions in the de novo biosynthetic pathway for UDP-N-acetylglucosamine (UDP-GlcNAc). The C-terminal domain catalyzes the transfer of acetyl group from acetyl coenzyme A to glucosamine-1-phosphate (GlcN-1-P) to produce N-acetylglucosamine-1-phosphate (GlcNAc-1-P), which is converted into UDP-GlcNAc by the transfer of uridine 5-monophosphate (from uridine 5-triphosphate), a reaction catalyzed by the N-terminal domain. The sequence is that of Bifunctional protein GlmU from Legionella pneumophila (strain Corby).